We begin with the raw amino-acid sequence, 590 residues long: Type I inositol polyphosphate 5-phosphatase 1 (590 aa).

Positions 47–73 are disordered; sequence DYSADSDDDYEDRSQEFDPISSGVTNP. The segment covering 48-57 has biased composition (acidic residues); that stretch reads YSADSDDDYE. S60 bears the Phosphoserine mark. Catalytic regions lie at residues 445–460 and 523–538; these read ERII…INLS and GKRR…WNGK.

The protein belongs to the inositol polyphosphate 5-phosphatase family. Expressed ubiquitously.

It carries out the reaction 1D-myo-inositol 1,4,5-trisphosphate + H2O = 1D-myo-inositol 1,4-bisphosphate + phosphate. It catalyses the reaction 1D-myo-inositol 1,3,4,5-tetrakisphosphate + H2O = 1D-myo-inositol 1,3,4-trisphosphate + phosphate. Its function is as follows. Has phosphatase activity toward Ins(1,4,5)P3 and Ins(1,3,4,5)P4, but not toward Ins(1,4)P2, Ins(1)P. Seems to be involved in the abscisic acid (ABA) signaling pathway. Could also be able to hydrolyze PtdIns(4,5)P2 and PtdIns(3,4,5)P3. The protein is Type I inositol polyphosphate 5-phosphatase 1 of Arabidopsis thaliana (Mouse-ear cress).